Reading from the N-terminus, the 284-residue chain is Spermidine synthase (284 aa).

Residues 6-241 (NGWFSEISEF…GSIGFILCSL (236 aa)) form the PABS domain. Gln-37 provides a ligand contact to S-adenosyl 3-(methylsulfanyl)propylamine. Tyr-67 is a binding site for putrescine. S-adenosyl 3-(methylsulfanyl)propylamine-binding positions include Gln-68, Asp-92, Glu-112, 143–144 (DG), and Asp-161. Asp-161 acts as the Proton acceptor in catalysis. Putrescine contacts are provided by residues 161 to 164 (DSSD) and Tyr-229.

Belongs to the spermidine/spermine synthase family.

It carries out the reaction S-adenosyl 3-(methylsulfanyl)propylamine + putrescine = S-methyl-5'-thioadenosine + spermidine + H(+). Its pathway is amine and polyamine biosynthesis; spermidine biosynthesis; spermidine from putrescine: step 1/1. Functionally, catalyzes the production of spermidine from putrescine and decarboxylated S-adenosylmethionine (dcSAM). Has a strong preference for putrescine as substrate. In Dictyostelium discoideum (Social amoeba), this protein is Spermidine synthase (spsA).